The sequence spans 1072 residues: Vacuolar membrane protease (1072 aa).

Residues 1–9 (MINPISFRP) are Cytoplasmic-facing. Residues 10–30 (GPVTFWTTLIYLALLIPIVII) traverse the membrane as a helical segment. At 31–404 (NEKTPAAPKT…SFVLFGLRGM (374 aa)) the chain is on the vacuolar side. N-linked (GlcNAc...) asparagine glycans are attached at residues asparagine 48, asparagine 116, asparagine 119, and asparagine 128. The Zn(2+) site is built by histidine 185 and aspartate 197. Glutamate 231 (proton acceptor) is an active-site residue. Positions 232, 257, and 330 each coordinate Zn(2+). A helical membrane pass occupies residues 405-425 (FAWSLTLLIATPLVLVGITWL). At 426 to 457 (LRNLDKDYFFTSTVKTKEHPEYEAVPIGGWKG) the chain is on the cytoplasmic side. Residues 458–478 (FFRFPFALGVAVFFTISSALL) traverse the membrane as a helical segment. Residues 479-492 (MNKVNPLIVYSSRY) lie on the Vacuolar side of the membrane. Residues 493–513 (SVWVMMVSIFYFSFWMIMRGA) form a helical membrane-spanning segment. Over 514 to 523 (NFVRPSALHR) the chain is Cytoplasmic. A helical membrane pass occupies residues 524–544 (GYANLWLFVFGWIVLVAVTAL). Over 545–554 (EDRRRIAAGY) the chain is Vacuolar. A helical transmembrane segment spans residues 555 to 575 (IFVFLESAIFLSCLISFVELL). Residues 576–747 (AVPRKSSYAL…YDHEQEWSGH (172 aa)) are Cytoplasmic-facing. A disordered region spans residues 593 to 713 (GQEHDHNGYQ…GTNDRGRTTF (121 aa)). Positions 606-617 (DSTDEPSLRARA) are enriched in basic and acidic residues. Over residues 643-661 (GTTNGLSTAPSVAAHSSQP) the composition is skewed to polar residues. A helical transmembrane segment spans residues 748–768 (LPSWAWFFQFLLLGPFMIILA). Residues 769–789 (AQTGLMLTDAVYQTGSDGSKL) are Vacuolar-facing. A helical transmembrane segment spans residues 790 to 810 (ITPYLIIFVFTVLLILPLTPF). Over 811–817 (IHRVTHH) the chain is Cytoplasmic. Residues 818 to 838 (IPVFLLVVFIVTLTYNLIAFP) traverse the membrane as a helical segment. The Vacuolar portion of the chain corresponds to 839–1072 (FSANNRYKTF…VEGRKAFKIV (234 aa)). Residues asparagine 932 and asparagine 974 are each glycosylated (N-linked (GlcNAc...) asparagine).

Belongs to the peptidase M28 family. Requires Zn(2+) as cofactor.

The protein localises to the vacuole membrane. Its function is as follows. May be involved in vacuolar sorting and osmoregulation. The sequence is that of Vacuolar membrane protease from Neurospora crassa (strain ATCC 24698 / 74-OR23-1A / CBS 708.71 / DSM 1257 / FGSC 987).